Here is a 109-residue protein sequence, read N- to C-terminus: MPFYEFAFIAQQGLTQYELEGLSKGLTALLVKMGAELVKYEYWGLLDFVYSIAKNNKGHYCMMYIRAEPAAMDEFKRKVKLNEDVLRFLCLKVDKVPEGRSAMMGSDQD.

The protein belongs to the bacterial ribosomal protein bS6 family.

Binds together with bS18 to 16S ribosomal RNA. The chain is Small ribosomal subunit protein bS6 from Anaplasma phagocytophilum (strain HZ).